Here is a 184-residue protein sequence, read N- to C-terminus: Protein DP71L (184 aa).

Positions M1–P15 are enriched in basic residues. Residues M1–S41 form a disordered region. Important for host CHOP inhibition stretches follow at residues V125 to F127 and L169 to L173.

The protein belongs to the asfivirus DP71L family. As to quaternary structure, interacts (via C-terminus) with host PPP1CB.

Functionally, interacts with the host phosphatase PP1 catalytic subunit (PPP1CB) and recruits it to dephosphorylate EIF2S1/eIF2alpha and therefore restores the host translation that has been shut-down by the host. Also inhibits the EIF2S1/eIF2alpha-ATF4-DDIT3/CHOP pathway. The polypeptide is Protein DP71L (Ornithodoros (relapsing fever ticks)).